The following is a 311-amino-acid chain: Halocin-S8 (311 aa).

2 propeptides span residues 1–230 (MSDK…IQLQ) and 267–311 (TVAC…TSFW).

Its subcellular location is the secreted. Functionally, has antibacterial activity against the haloarchaeons H.salinarium NRC817, Halobacterium GRB and H.gibbonsii. This is Halocin-S8 (halS8) from Haloarchaeon S8a.